The sequence spans 3456 residues: Genome polyprotein (3456 aa).

The 144-residue stretch at 600 to 743 (NVANIPLDDF…ATRLKQIQFY (144 aa)) folds into the Peptidase S30 domain. Active-site for P1 proteinase activity residues include H640, D652, and S689. One can recognise a Peptidase C6 domain in the interval 1075–1196 (VWEFNEGYCY…EGEMLTYKVG (122 aa)). C1083 serves as the catalytic For helper component proteinase activity. The HAT 1 repeat unit spans residues 1094-1126 (FINEDEMEFYKNQMNQIVLNLGAWPTFEQYLVE). The For helper component proteinase activity role is filled by H1155. Residues 1617–1768 (NIRTSGETDV…TRHKIKVETL (152 aa)) form the Helicase ATP-binding domain. 1630–1637 (SGVGGGKS) is an ATP binding site. The Helicase C-terminal domain maps to 1787-1947 (DATSVGDVIL…GIKPVCDRVD (161 aa)). Position 2304 is an O-(5'-phospho-RNA)-tyrosine (Y2304). Residues 2412–2636 (AVDSHVGTPT…VEWSRLLPTT (225 aa)) form the Peptidase C4 domain. Catalysis depends on for nuclear inclusion protein A activity residues H2457, D2494, and C2566. The HAT 2 repeat unit spans residues 2597–2629 (HIFEPVNETFIEMLAKMEYAKGFWKFNPELVEW). Residues 2891–3011 (WVFIDCDGSR…NCPRSTANAI (121 aa)) form the RdRp catalytic domain. The HAT 3 repeat unit spans residues 3082-3115 (LNAAYIESFGYEDLMTEIEKFAHFWAKKHGLNDV).

VPg is uridylylated by the polymerase and is covalently attached to the 5'-end of the genomic RNA. This uridylylated form acts as a nucleotide-peptide primer for the polymerase. Post-translationally, genome polyprotein of potyviruses undergoes post-translational proteolytic processing by the main proteinase NIa-pro resulting in the production of at least ten individual proteins. The P1 proteinase and the HC-pro cleave only their respective C-termini autocatalytically. 6K1 is essential for proper proteolytic separation of P3 from CI.

The protein localises to the host cytoplasmic vesicle. It localises to the virion. The catalysed reaction is RNA(n) + a ribonucleoside 5'-triphosphate = RNA(n+1) + diphosphate. The enzyme catalyses Hydrolyzes glutaminyl bonds, and activity is further restricted by preferences for the amino acids in P6 - P1' that vary with the species of potyvirus, e.g. Glu-Xaa-Xaa-Tyr-Xaa-Gln-|-(Ser or Gly) for the enzyme from tobacco etch virus. The natural substrate is the viral polyprotein, but other proteins and oligopeptides containing the appropriate consensus sequence are also cleaved.. It carries out the reaction Hydrolyzes a Gly-|-Gly bond at its own C-terminus, commonly in the sequence -Tyr-Xaa-Val-Gly-|-Gly, in the processing of the potyviral polyprotein.. Its function is as follows. Required for aphid transmission and also has proteolytic activity. Only cleaves a Gly-Gly dipeptide at its own C-terminus. Interacts with virions and aphid stylets. Acts as a suppressor of RNA-mediated gene silencing, also known as post-transcriptional gene silencing (PTGS), a mechanism of plant viral defense that limits the accumulation of viral RNAs. May have RNA-binding activity. Has helicase activity. It may be involved in replication. In terms of biological role, indispensable for virus replication. Functionally, mediates the cap-independent, EIF4E-dependent translation of viral genomic RNAs. Binds to the cap-binding site of host EIF4E and thus interferes with the host EIF4E-dependent mRNA export and translation. VPg-RNA directly binds EIF4E and is a template for transcription. Also forms trimeric complexes with EIF4E-EIF4G, which are templates for translation. Its function is as follows. Has RNA-binding and proteolytic activities. An RNA-dependent RNA polymerase that plays an essential role in the virus replication. In terms of biological role, involved in aphid transmission, cell-to-cell and systemis movement, encapsidation of the viral RNA and in the regulation of viral RNA amplification. This is Genome polyprotein from Sweet potato mild mottle virus (isolate Salazar) (SPMMV).